Consider the following 271-residue polypeptide: Probable ribosomal RNA small subunit methyltransferase A (271 aa).

Leucine 12, glycine 37, glutamate 58, aspartate 83, and asparagine 100 together coordinate S-adenosyl-L-methionine.

The protein belongs to the class I-like SAM-binding methyltransferase superfamily. rRNA adenine N(6)-methyltransferase family. RsmA subfamily.

It localises to the cytoplasm. Specifically dimethylates two adjacent adenosines in the loop of a conserved hairpin near the 3'-end of 16S rRNA in the 30S particle. May play a critical role in biogenesis of 30S subunits. This Methanococcus aeolicus (strain ATCC BAA-1280 / DSM 17508 / OCM 812 / Nankai-3) protein is Probable ribosomal RNA small subunit methyltransferase A.